The following is a 62-amino-acid chain: Large ribosomal subunit protein eL24 (62 aa).

Zn(2+) is bound by residues Cys-6, Cys-9, Cys-32, and Cys-36. Residues 6-36 (CSFCEGKIEPGCGKKYVKKDGSVMQFCSSKC) form a C4-type zinc finger.

Belongs to the eukaryotic ribosomal protein eL24 family. Part of the 50S ribosomal subunit. Forms a cluster with proteins L3 and L14. The cofactor is Zn(2+).

Binds to the 23S rRNA. This chain is Large ribosomal subunit protein eL24, found in Methanococcus vannielii (strain ATCC 35089 / DSM 1224 / JCM 13029 / OCM 148 / SB).